The primary structure comprises 212 residues: Leucyl/phenylalanyl-tRNA--protein transferase (212 aa).

Belongs to the L/F-transferase family.

It is found in the cytoplasm. It catalyses the reaction N-terminal L-lysyl-[protein] + L-leucyl-tRNA(Leu) = N-terminal L-leucyl-L-lysyl-[protein] + tRNA(Leu) + H(+). The enzyme catalyses N-terminal L-arginyl-[protein] + L-leucyl-tRNA(Leu) = N-terminal L-leucyl-L-arginyl-[protein] + tRNA(Leu) + H(+). It carries out the reaction L-phenylalanyl-tRNA(Phe) + an N-terminal L-alpha-aminoacyl-[protein] = an N-terminal L-phenylalanyl-L-alpha-aminoacyl-[protein] + tRNA(Phe). Functionally, functions in the N-end rule pathway of protein degradation where it conjugates Leu, Phe and, less efficiently, Met from aminoacyl-tRNAs to the N-termini of proteins containing an N-terminal arginine or lysine. In Christiangramia forsetii (strain DSM 17595 / CGMCC 1.15422 / KT0803) (Gramella forsetii), this protein is Leucyl/phenylalanyl-tRNA--protein transferase.